A 410-amino-acid polypeptide reads, in one-letter code: ATP phosphoribosyltransferase regulatory subunit (410 aa).

Belongs to the class-II aminoacyl-tRNA synthetase family. HisZ subfamily. As to quaternary structure, heteromultimer composed of HisG and HisZ subunits.

The protein resides in the cytoplasm. Its pathway is amino-acid biosynthesis; L-histidine biosynthesis; L-histidine from 5-phospho-alpha-D-ribose 1-diphosphate: step 1/9. In terms of biological role, required for the first step of histidine biosynthesis. May allow the feedback regulation of ATP phosphoribosyltransferase activity by histidine. The polypeptide is ATP phosphoribosyltransferase regulatory subunit (Synechococcus sp. (strain JA-3-3Ab) (Cyanobacteria bacterium Yellowstone A-Prime)).